The chain runs to 579 residues: Mycobactin import ATP-binding/permease protein IrtB (579 aa).

Residues 1 to 16 are Cytoplasmic-facing; that stretch reads MIRTWIALVPNDHRAR. The chain crosses the membrane as a helical span at residues 17 to 37; that stretch reads LIGFALLAFCSVVARAVGTVL. An ABC transmembrane type-1 domain is found at 17-299; the sequence is LIGFALLAFC…VSELAPALES (283 aa). The Periplasmic portion of the chain corresponds to 38–52; the sequence is LVPLMAALFGEAPQR. Residues 53 to 73 traverse the membrane as a helical segment; the sequence is AWLWLGWLSAATVAGWVLDAV. The Cytoplasmic portion of the chain corresponds to 74-123; sequence TARIGIELGFAVLNHTQHDVADRLPVVRLDWFTAENTATARQAIAATGPE. The chain crosses the membrane as a helical span at residues 124–146; that stretch reads LVGLVVNLVTPLTSAILLPAVIA. Residues 147 to 155 are Periplasmic-facing; it reads LALLPISWQ. The helical transmembrane segment at 156 to 178 threads the bilayer; the sequence is LGVAALAGVPLLLGALWASAAFA. At 179 to 237 the chain is on the cytoplasmic side; the sequence is RRADTAADKANTALTERIIEFARTQQALRAARRVEPARSLVGNALASQHTATMRLLGMQ. Residues 238-258 form a helical membrane-spanning segment; it reads IPGQLLFSIASQLALIVLAGT. Topologically, residues 259-579 are periplasmic; that stretch reads TAALTITGTL…EAAEWQILAE (321 aa). Positions 332–567 constitute an ABC transporter domain; the sequence is IEFDDVAFGY…GGRFSQFWRQ (236 aa). 366–373 is an ATP binding site; it reads GPSGCGKS.

Belongs to the ABC transporter superfamily. Siderophore-Fe(3+) uptake transporter (SIUT) (TC 3.A.1.21) family. Forms a heterodimer with IrtA.

It localises to the cell inner membrane. Part of the ABC transporter complex IrtAB involved in the import of iron-bound mycobactin (Fe-MBT) and carboxymycobactin (Fe-cMBT). Transmembrane domains (TMD) form a pore in the membrane and the ATP-binding domain (NBD) is responsible for energy generation. The polypeptide is Mycobactin import ATP-binding/permease protein IrtB (irtB) (Mycobacterium bovis (strain ATCC BAA-935 / AF2122/97)).